Reading from the N-terminus, the 275-residue chain is uncharacterized protein (275 aa).

Its subcellular location is the virion. This is an uncharacterized protein from Acanthamoeba polyphaga (Amoeba).